Reading from the N-terminus, the 382-residue chain is Galactokinase (382 aa).

Substrate is bound at residue 34-37; it reads EHTD. 124 to 130 provides a ligand contact to ATP; that stretch reads GAGLSSS. Serine 130 and glutamate 162 together coordinate Mg(2+). The active-site Proton acceptor is aspartate 174. Substrate is bound at residue tyrosine 223.

It belongs to the GHMP kinase family. GalK subfamily.

Its subcellular location is the cytoplasm. The catalysed reaction is alpha-D-galactose + ATP = alpha-D-galactose 1-phosphate + ADP + H(+). The protein operates within carbohydrate metabolism; galactose metabolism. Functionally, catalyzes the transfer of the gamma-phosphate of ATP to D-galactose to form alpha-D-galactose-1-phosphate (Gal-1-P). The protein is Galactokinase of Shigella boydii serotype 18 (strain CDC 3083-94 / BS512).